Here is a 261-residue protein sequence, read N- to C-terminus: 3-hydroxyacyl-CoA dehydrogenase type-2 (261 aa).

Position 2 is an N-acetylalanine (A2). Residues S20, L22, and D41 each contribute to the NAD(+) site. K53 bears the N6-acetyllysine; alternate mark. The residue at position 53 (K53) is an N6-succinyllysine; alternate. NAD(+)-binding residues include D64 and V65. K69 carries the post-translational modification N6-acetyllysine. NAD(+) is bound at residue C91. An N6-acetyllysine mark is found at K99 and K105. S155 is a substrate binding site. NAD(+)-binding residues include Y168, K172, F201, and T203. The active-site Proton acceptor is Y168. K212 carries the N6-acetyllysine; alternate modification. Position 212 is an N6-succinyllysine; alternate (K212).

Belongs to the short-chain dehydrogenases/reductases (SDR) family. Homotetramer. Component of mitochondrial ribonuclease P, a complex composed of TRMT10C/MRPP1, HSD17B10/MRPP2 and PRORP/MRPP3. Interacts with TRMT10C/MRPP1; forming the MRPP1-MRPP2 subcomplex of the mitochondrial ribonuclease P complex. In terms of tissue distribution, ubiquitously expressed in normal tissues but is overexpressed in neurons affected in AD.

The protein localises to the mitochondrion. It localises to the mitochondrion matrix. It is found in the mitochondrion nucleoid. The enzyme catalyses a (3S)-3-hydroxyacyl-CoA + NAD(+) = a 3-oxoacyl-CoA + NADH + H(+). The catalysed reaction is (2S,3S)-3-hydroxy-2-methylbutanoyl-CoA + NAD(+) = 2-methyl-3-oxobutanoyl-CoA + NADH + H(+). It carries out the reaction testosterone + NAD(+) = androst-4-ene-3,17-dione + NADH + H(+). It catalyses the reaction 5alpha-androstane-3alpha,17beta-diol + NAD(+) = 17beta-hydroxy-5alpha-androstan-3-one + NADH + H(+). The enzyme catalyses 17beta-estradiol + NAD(+) = estrone + NADH + H(+). The catalysed reaction is cholate + NAD(+) = 3alpha,12alpha-dihydroxy-7-oxo-5beta-cholanate + NADH + H(+). It carries out the reaction (3S)-3-hydroxybutanoyl-CoA + NAD(+) = acetoacetyl-CoA + NADH + H(+). It catalyses the reaction (3S)-hydroxyoctanoyl-CoA + NAD(+) = 3-oxooctanoyl-CoA + NADH + H(+). The enzyme catalyses (3S)-hydroxyhexadecanoyl-CoA + NAD(+) = 3-oxohexadecanoyl-CoA + NADH + H(+). The catalysed reaction is 17beta-hydroxy-5alpha-androstan-3-one + NAD(+) = 5alpha-androstan-3,17-dione + NADH + H(+). It carries out the reaction 5alpha-pregnan-20beta-ol-3-one + NAD(+) = 5alpha-pregnane-3,20-dione + NADH + H(+). It catalyses the reaction 3alpha-hydroxy-5alpha-pregnan-20-one + NAD(+) = 5alpha-pregnane-3,20-dione + NADH + H(+). The enzyme catalyses cortisone + NAD(+) = 17alpha-hydroxypregn-4-en-3,11,20-trione-21-al + NADH + H(+). The catalysed reaction is 11-dehydrocorticosterone + NAD(+) = pregn-4-ene-3,11,20,21-tetraone + NADH + H(+). It carries out the reaction cortisol + NAD(+) = 11beta,17alpha-dihydroxypregn-4-ene-3,20,21-trione + NADH + H(+). It catalyses the reaction chenodeoxycholate + NAD(+) = 7-oxolithocholate + NADH + H(+). The enzyme catalyses ursodeoxycholate + NAD(+) = 7-oxolithocholate + NADH + H(+). The catalysed reaction is 3beta,7beta-dihydroxy-5beta-cholan-24-oate + NAD(+) = 3beta-hydroxy-7-oxo-5beta-cholan-24-oate + NADH + H(+). It participates in amino-acid degradation; L-isoleucine degradation. Its pathway is lipid metabolism; fatty acid beta-oxidation. The protein operates within steroid metabolism. It functions in the pathway lipid metabolism; bile acid biosynthesis. Its activity is regulated as follows. The phospholipase C-like activity toward cardiolipin is inhibited by amyloid-beta peptide. Functionally, mitochondrial dehydrogenase involved in pathways of fatty acid, branched-chain amino acid and steroid metabolism. Acts as (S)-3-hydroxyacyl-CoA dehydrogenase in mitochondrial fatty acid beta-oxidation, a major degradation pathway of fatty acids. Catalyzes the third step in the beta-oxidation cycle, namely the reversible conversion of (S)-3-hydroxyacyl-CoA to 3-ketoacyl-CoA. Preferentially accepts straight medium- and short-chain acyl-CoA substrates with highest efficiency for (3S)-hydroxybutanoyl-CoA. Acts as 3-hydroxy-2-methylbutyryl-CoA dehydrogenase in branched-chain amino acid catabolic pathway. Catalyzes the oxidation of 3-hydroxy-2-methylbutanoyl-CoA into 2-methyl-3-oxobutanoyl-CoA, a step in isoleucine degradation pathway. Has hydroxysteroid dehydrogenase activity toward steroid hormones and bile acids. Catalyzes the oxidation of 3alpha-, 17beta-, 20beta- and 21-hydroxysteroids and 7alpha- and 7beta-hydroxy bile acids. Oxidizes allopregnanolone/brexanolone at the 3alpha-hydroxyl group, which is known to be critical for the activation of gamma-aminobutyric acid receptors (GABAARs) chloride channel. Has phospholipase C-like activity toward cardiolipin and its oxidized species. Likely oxidizes the 2'-hydroxyl in the head group of cardiolipin to form a ketone intermediate that undergoes nucleophilic attack by water and fragments into diacylglycerol, dihydroxyacetone and orthophosphate. Has higher affinity for cardiolipin with oxidized fatty acids and may degrade these species during the oxidative stress response to protect cells from apoptosis. By interacting with intracellular amyloid-beta, it may contribute to the neuronal dysfunction associated with Alzheimer disease (AD). Essential for structural and functional integrity of mitochondria. In terms of biological role, in addition to mitochondrial dehydrogenase activity, moonlights as a component of mitochondrial ribonuclease P, a complex that cleaves tRNA molecules in their 5'-ends. Together with TRMT10C/MRPP1, forms a subcomplex of the mitochondrial ribonuclease P, named MRPP1-MRPP2 subcomplex, which displays functions that are independent of the ribonuclease P activity. The MRPP1-MRPP2 subcomplex catalyzes the formation of N(1)-methylguanine and N(1)-methyladenine at position 9 (m1G9 and m1A9, respectively) in tRNAs; HSD17B10/MRPP2 acting as a non-catalytic subunit. The MRPP1-MRPP2 subcomplex also acts as a tRNA maturation platform: following 5'-end cleavage by the mitochondrial ribonuclease P complex, the MRPP1-MRPP2 subcomplex enhances the efficiency of 3'-processing catalyzed by ELAC2, retains the tRNA product after ELAC2 processing and presents the nascent tRNA to the mitochondrial CCA tRNA nucleotidyltransferase TRNT1 enzyme. Associates with mitochondrial DNA complexes at the nucleoids to initiate RNA processing and ribosome assembly. The sequence is that of 3-hydroxyacyl-CoA dehydrogenase type-2 (HSD17B10) from Homo sapiens (Human).